A 1270-amino-acid polypeptide reads, in one-letter code: Nuclear exosome regulator NRDE2 (1270 aa).

2 disordered regions span residues 1-22 and 119-209; these read MFRA…ENPD and SVKS…HTLM. The segment covering 119-135 has biased composition (polar residues); that stretch reads SVKSLNGCQDPPETSQQ. The span at 164–184 shows a compositional bias: basic residues; the sequence is QRSRSREKKRRKKERRRKRSS. Residues 192-204 are compositionally biased toward basic and acidic residues; that stretch reads RSRDRSSRARDTS.

The protein belongs to the NRDE2 family. Interacts with nrde-3.

The protein localises to the nucleus. It is found in the nucleus speckle. It localises to the nucleolus. Protein of the nuclear speckles that regulates RNA exosomal degradation. Involved in short interfering RNAs-mediated silencing in nuclei. Functions with nrde-3 in the nuclear RNA-mediated gene silencing (RNAi) pathway to regulate gene expression via inhibition of RNA polymerases I and II during the elongation phase of transcription. Required for exogenous RNAi-induced H3K27 methylation. The chain is Nuclear exosome regulator NRDE2 (nrde-2) from Caenorhabditis elegans.